A 314-amino-acid chain; its full sequence is Periplasmic [NiFe] hydrogenase small subunit (314 aa).

A signal peptide (tat-type signal) is located at residues 1–49; the sequence is MNFSVGLGRDDAEKRLVQNGVSRRDFMKFCATVAAAMGMGPAFAPKVAE. Positions 67, 70, 164, 197, 234, 237, 262, and 268 each coordinate [4Fe-4S] cluster. Residues Cys-277, Cys-295, and Cys-298 each contribute to the [3Fe-4S] cluster site.

The protein belongs to the [NiFe]/[NiFeSe] hydrogenase small subunit family. As to quaternary structure, heterodimer of a large and a small subunit. [4Fe-4S] cluster serves as cofactor. Requires [3Fe-4S] cluster as cofactor. Post-translationally, predicted to be exported by the Tat system. The position of the signal peptide cleavage has been experimentally proven.

The protein resides in the periplasm. It catalyses the reaction 2 Fe(III)-[cytochrome c3] + H2 = 2 Fe(II)-[cytochrome c3] + 2 H(+). Its function is as follows. Involved in hydrogen uptake for the anaerobic reduction of sulfate to hydrogen sulfide in an electron transport chain. Cytochrome c3 is the physiological electron acceptor. In Solidesulfovibrio fructosivorans (Desulfovibrio fructosivorans), this protein is Periplasmic [NiFe] hydrogenase small subunit (hydA).